Consider the following 568-residue polypeptide: Urease subunit alpha (568 aa).

A Urease domain is found at Gly131 to Tyr568. Ni(2+) contacts are provided by His136, His138, and Lys219. N6-carboxylysine is present on Lys219. His221 is a binding site for substrate. Residues His248 and His274 each contribute to the Ni(2+) site. The active-site Proton donor is His322. Position 362 (Asp362) interacts with Ni(2+).

It belongs to the metallo-dependent hydrolases superfamily. Urease alpha subunit family. In terms of assembly, heterotrimer of UreA (gamma), UreB (beta) and UreC (alpha) subunits. Three heterotrimers associate to form the active enzyme. The cofactor is Ni cation. In terms of processing, carboxylation allows a single lysine to coordinate two nickel ions.

It is found in the cytoplasm. The enzyme catalyses urea + 2 H2O + H(+) = hydrogencarbonate + 2 NH4(+). The protein operates within nitrogen metabolism; urea degradation; CO(2) and NH(3) from urea (urease route): step 1/1. The protein is Urease subunit alpha of Cereibacter sphaeroides (strain KD131 / KCTC 12085) (Rhodobacter sphaeroides).